A 484-amino-acid chain; its full sequence is Aldehyde dehydrogenase family 3 member F1 (484 aa).

Residue 192–197 participates in NAD(+) binding; it reads GSPKIG. E214 functions as the Proton acceptor in the catalytic mechanism. The active-site Nucleophile is C252.

This sequence belongs to the aldehyde dehydrogenase family. Homotetramer. Constituively expressed at low levels.

The catalysed reaction is an aldehyde + NAD(+) + H2O = a carboxylate + NADH + 2 H(+). The sequence is that of Aldehyde dehydrogenase family 3 member F1 (ALDH3F1) from Arabidopsis thaliana (Mouse-ear cress).